The following is a 530-amino-acid chain: Copine-B (530 aa).

2 C2 domains span residues 1–125 and 130–253; these read MTTP…SEIK and ETGV…PLIN. Positions 25, 31, 85, 87, and 100 each coordinate Ca(2+). The region spanning 294–513 is the VWFA domain; sequence NLMVAIDCTA…ETLREIPQQL (220 aa).

Belongs to the copine family. Ca(2+) serves as cofactor.

In Dictyostelium discoideum (Social amoeba), this protein is Copine-B (cpnB-1).